The sequence spans 254 residues: 5'-nucleotidase SurE (254 aa).

Residues D8, D9, S38, and N91 each coordinate a divalent metal cation.

It belongs to the SurE nucleotidase family. It depends on a divalent metal cation as a cofactor.

The protein resides in the cytoplasm. The enzyme catalyses a ribonucleoside 5'-phosphate + H2O = a ribonucleoside + phosphate. Nucleotidase that shows phosphatase activity on nucleoside 5'-monophosphates. The polypeptide is 5'-nucleotidase SurE (Anaeromyxobacter dehalogenans (strain 2CP-1 / ATCC BAA-258)).